The primary structure comprises 392 residues: Galactokinase (392 aa).

33–36 contacts substrate; sequence EHTD. ATP-binding positions include serine 67 and 129–135; that span reads GSGLSSS. Mg(2+) contacts are provided by serine 135 and glutamate 167. The Proton acceptor role is filled by aspartate 179. Tyrosine 229 serves as a coordination point for substrate.

The protein belongs to the GHMP kinase family. GalK subfamily.

The protein localises to the cytoplasm. The catalysed reaction is alpha-D-galactose + ATP = alpha-D-galactose 1-phosphate + ADP + H(+). It functions in the pathway carbohydrate metabolism; galactose metabolism. Functionally, catalyzes the transfer of the gamma-phosphate of ATP to D-galactose to form alpha-D-galactose-1-phosphate (Gal-1-P). The polypeptide is Galactokinase (Limosilactobacillus reuteri (strain DSM 20016) (Lactobacillus reuteri)).